Consider the following 558-residue polypeptide: Formate--tetrahydrofolate ligase (558 aa).

Residue 66-73 coordinates ATP; that stretch reads TPAGEGKT.

This sequence belongs to the formate--tetrahydrofolate ligase family.

It carries out the reaction (6S)-5,6,7,8-tetrahydrofolate + formate + ATP = (6R)-10-formyltetrahydrofolate + ADP + phosphate. Its pathway is one-carbon metabolism; tetrahydrofolate interconversion. The polypeptide is Formate--tetrahydrofolate ligase (Clostridioides difficile (strain 630) (Peptoclostridium difficile)).